Reading from the N-terminus, the 514-residue chain is Putative binding protein HI_0213 (514 aa).

The first 23 residues, M1–A23, serve as a signal peptide directing secretion. C24 carries N-palmitoyl cysteine lipidation. C24 carries S-diacylglycerol cysteine lipidation.

It belongs to the bacterial solute-binding protein 5 family.

The protein resides in the cell membrane. Its function is as follows. Part of a binding-protein-dependent transport system. In Haemophilus influenzae (strain ATCC 51907 / DSM 11121 / KW20 / Rd), this protein is Putative binding protein HI_0213.